We begin with the raw amino-acid sequence, 256 residues long: tRNA (guanine-N(7)-)-methyltransferase (256 aa).

Residues 1–15 (MVATGGQAQDQSHNQ) show a composition bias toward polar residues. A disordered region spans residues 1–22 (MVATGGQAQDQSHNQEPGVLCP). Residues Gly79, 102-103 (EI), 137-138 (NA), and Leu157 contribute to the S-adenosyl-L-methionine site. Residue Asp160 is part of the active site. 235–237 (SEE) serves as a coordination point for S-adenosyl-L-methionine.

Belongs to the class I-like SAM-binding methyltransferase superfamily. TrmB family.

It localises to the nucleus. It carries out the reaction guanosine(46) in tRNA + S-adenosyl-L-methionine = N(7)-methylguanosine(46) in tRNA + S-adenosyl-L-homocysteine. It participates in tRNA modification; N(7)-methylguanine-tRNA biosynthesis. Functionally, catalyzes the formation of N(7)-methylguanine at position 46 (m7G46) in tRNA. In Drosophila yakuba (Fruit fly), this protein is tRNA (guanine-N(7)-)-methyltransferase.